The sequence spans 476 residues: Aspartyl/glutamyl-tRNA(Asn/Gln) amidotransferase subunit B (476 aa).

Belongs to the GatB/GatE family. GatB subfamily. In terms of assembly, heterotrimer of A, B and C subunits.

The catalysed reaction is L-glutamyl-tRNA(Gln) + L-glutamine + ATP + H2O = L-glutaminyl-tRNA(Gln) + L-glutamate + ADP + phosphate + H(+). It catalyses the reaction L-aspartyl-tRNA(Asn) + L-glutamine + ATP + H2O = L-asparaginyl-tRNA(Asn) + L-glutamate + ADP + phosphate + 2 H(+). Its function is as follows. Allows the formation of correctly charged Asn-tRNA(Asn) or Gln-tRNA(Gln) through the transamidation of misacylated Asp-tRNA(Asn) or Glu-tRNA(Gln) in organisms which lack either or both of asparaginyl-tRNA or glutaminyl-tRNA synthetases. The reaction takes place in the presence of glutamine and ATP through an activated phospho-Asp-tRNA(Asn) or phospho-Glu-tRNA(Gln). This chain is Aspartyl/glutamyl-tRNA(Asn/Gln) amidotransferase subunit B, found in Shouchella clausii (strain KSM-K16) (Alkalihalobacillus clausii).